A 346-amino-acid chain; its full sequence is UPF0718 protein YraQ (346 aa).

The next 9 helical transmembrane spans lie at P12–V32, M71–I91, L113–A133, A146–F166, V167–I187, A223–G243, S260–A280, A296–L316, and W326–F346.

It belongs to the UPF0718 family.

The protein localises to the cell membrane. The protein is UPF0718 protein YraQ (yraQ) of Escherichia coli (strain K12).